The sequence spans 335 residues: Tetraacyldisaccharide 4'-kinase (335 aa).

58–65 contributes to the ATP binding site; the sequence is TVGGSGKT.

This sequence belongs to the LpxK family.

The catalysed reaction is a lipid A disaccharide + ATP = a lipid IVA + ADP + H(+). Its pathway is glycolipid biosynthesis; lipid IV(A) biosynthesis; lipid IV(A) from (3R)-3-hydroxytetradecanoyl-[acyl-carrier-protein] and UDP-N-acetyl-alpha-D-glucosamine: step 6/6. In terms of biological role, transfers the gamma-phosphate of ATP to the 4'-position of a tetraacyldisaccharide 1-phosphate intermediate (termed DS-1-P) to form tetraacyldisaccharide 1,4'-bis-phosphate (lipid IVA). The chain is Tetraacyldisaccharide 4'-kinase from Shewanella sp. (strain MR-4).